The sequence spans 126 residues: Holo-[acyl-carrier-protein] synthase (126 aa).

Mg(2+) contacts are provided by Asp9 and Glu58.

It belongs to the P-Pant transferase superfamily. AcpS family. The cofactor is Mg(2+).

It is found in the cytoplasm. It catalyses the reaction apo-[ACP] + CoA = holo-[ACP] + adenosine 3',5'-bisphosphate + H(+). Transfers the 4'-phosphopantetheine moiety from coenzyme A to a Ser of acyl-carrier-protein. The protein is Holo-[acyl-carrier-protein] synthase of Serratia proteamaculans (strain 568).